A 319-amino-acid chain; its full sequence is Urease accessory protein UreD (319 aa).

The disordered stretch occupies residues 254 to 273 (PDPVGSPAARRESVPAKRAE). Residues 262-273 (ARRESVPAKRAE) are compositionally biased toward basic and acidic residues.

The protein belongs to the UreD family. UreD, UreF and UreG form a complex that acts as a GTP-hydrolysis-dependent molecular chaperone, activating the urease apoprotein by helping to assemble the nickel containing metallocenter of UreC. The UreE protein probably delivers the nickel.

It is found in the cytoplasm. Required for maturation of urease via the functional incorporation of the urease nickel metallocenter. The chain is Urease accessory protein UreD from Frankia casuarinae (strain DSM 45818 / CECT 9043 / HFP020203 / CcI3).